Here is a 216-residue protein sequence, read N- to C-terminus: Thiopurine S-methyltransferase (216 aa).

S-adenosyl-L-methionine contacts are provided by Trp-10, Leu-45, Glu-66, and Arg-123.

The protein belongs to the class I-like SAM-binding methyltransferase superfamily. TPMT family.

It is found in the cytoplasm. The catalysed reaction is S-adenosyl-L-methionine + a thiopurine = S-adenosyl-L-homocysteine + a thiopurine S-methylether.. The chain is Thiopurine S-methyltransferase from Pseudomonas putida (strain GB-1).